The following is a 332-amino-acid chain: Receptor polysaccharide phosphotransferase WefC (332 aa).

The protein belongs to the stealth family.

The sequence is that of Receptor polysaccharide phosphotransferase WefC (wefC) from Streptococcus oralis.